The sequence spans 120 residues: Large ribosomal subunit protein bL19 (120 aa).

It belongs to the bacterial ribosomal protein bL19 family.

Functionally, this protein is located at the 30S-50S ribosomal subunit interface and may play a role in the structure and function of the aminoacyl-tRNA binding site. This chain is Large ribosomal subunit protein bL19, found in Thermosynechococcus vestitus (strain NIES-2133 / IAM M-273 / BP-1).